The sequence spans 488 residues: 3-octaprenyl-4-hydroxybenzoate carboxy-lyase (488 aa).

A Mn(2+)-binding site is contributed by asparagine 172. Residues 175-177, 189-191, and 194-195 each bind prenylated FMN; these read IYR, RWL, and RG. Position 238 (glutamate 238) interacts with Mn(2+). The Proton donor role is filled by aspartate 287.

The protein belongs to the UbiD family. As to quaternary structure, homohexamer. Requires prenylated FMN as cofactor. Mn(2+) serves as cofactor.

The protein resides in the cell membrane. It catalyses the reaction a 4-hydroxy-3-(all-trans-polyprenyl)benzoate + H(+) = a 2-(all-trans-polyprenyl)phenol + CO2. The protein operates within cofactor biosynthesis; ubiquinone biosynthesis. Functionally, catalyzes the decarboxylation of 3-octaprenyl-4-hydroxy benzoate to 2-octaprenylphenol, an intermediate step in ubiquinone biosynthesis. This is 3-octaprenyl-4-hydroxybenzoate carboxy-lyase from Pseudomonas syringae pv. tomato (strain ATCC BAA-871 / DC3000).